The following is a 123-amino-acid chain: Protein Wnt-3b (123 aa).

A lipid anchor (O-palmitoleoyl serine; by PORCN) is attached at serine 1. Residues cysteine 89 and cysteine 104 are joined by a disulfide bond. Asparagine 90 is a glycosylation site (N-linked (GlcNAc...) asparagine).

Belongs to the Wnt family. Palmitoleoylation is required for efficient binding to frizzled receptors. Depalmitoleoylation leads to Wnt signaling pathway inhibition.

It localises to the secreted. It is found in the extracellular space. The protein localises to the extracellular matrix. In terms of biological role, ligand for members of the frizzled family of seven transmembrane receptors. Probable developmental protein. May be a signaling molecule which affects the development of discrete regions of tissues. Is likely to signal over only few cell diameters. This is Protein Wnt-3b (WNT3B) from Meleagris gallopavo (Wild turkey).